The sequence spans 249 residues: Acetylglutamate kinase (249 aa).

Substrate contacts are provided by residues 38-39, Arg-60, and Asn-147; that span reads GG.

The protein belongs to the acetylglutamate kinase family. ArgB subfamily.

It localises to the cytoplasm. It catalyses the reaction N-acetyl-L-glutamate + ATP = N-acetyl-L-glutamyl 5-phosphate + ADP. The protein operates within amino-acid biosynthesis; L-arginine biosynthesis; N(2)-acetyl-L-ornithine from L-glutamate: step 2/4. Its function is as follows. Catalyzes the ATP-dependent phosphorylation of N-acetyl-L-glutamate. The chain is Acetylglutamate kinase from Deinococcus radiodurans (strain ATCC 13939 / DSM 20539 / JCM 16871 / CCUG 27074 / LMG 4051 / NBRC 15346 / NCIMB 9279 / VKM B-1422 / R1).